The following is a 522-amino-acid chain: Cytochrome P450 1A1 (522 aa).

Phe229 is a substrate binding site. Cys463 contributes to the heme binding site.

This sequence belongs to the cytochrome P450 family. Requires heme as cofactor. As to expression, liver.

It is found in the endoplasmic reticulum membrane. Its subcellular location is the microsome membrane. The enzyme catalyses an organic molecule + reduced [NADPH--hemoprotein reductase] + O2 = an alcohol + oxidized [NADPH--hemoprotein reductase] + H2O + H(+). In terms of biological role, cytochromes P450 are a group of heme-thiolate monooxygenases. They oxidize a variety of structurally unrelated compounds, including steroids, fatty acids, and xenobiotics. The polypeptide is Cytochrome P450 1A1 (cyp1a1) (Oncorhynchus mykiss (Rainbow trout)).